Here is a 524-residue protein sequence, read N- to C-terminus: MHCTCVRQSDLPNTTRLFADVLYHPDKTADFYQYPLRNLEAYQAAAAAIDFTPERRAALIAALRVQNPESPALSRLAEPGTVAVVTGQQVGLFSGPSYTIYKVLHAVKLAKWLSDNGTPAVPLFWLATEDHDFAEVNHVWVFDSHHHPRKLEMRRTALEQPVGSVTLAAPPVPELRATLHGLPFGEEVADLVEETYRAGSTMGKSFAELLRRLLAQFDIPYVDPMLPAFRELAAPALRSAVEAAPDLTSQLLQRNRELSDAGYHSQVHVEDHTSLVFLLENGKRLNLRRAGNEYVHNSRRFTAAELMDRAASLSPNAILRPVIQDSMLPTVAYIGGPAEIAYFAQSQVLYRTLLGRMPIAAPRTGYTILDSRSAKLMNRYGLEVTDFFHGETPLKERLASRLVPPRLGDTVRATTATVESAVGRLRAELAAFDPTLAQALDRSARKINYQIEKMERKTAREAMRRDARAASDAESLCGLIYPERHLQERLYSILPFLAKHGLDLPARIYDSIELECTDHRVMVV.

The stretch at 437–457 (AQALDRSARKINYQIEKMERK) forms a coiled coil.

This sequence belongs to the BshC family.

In Solibacter usitatus (strain Ellin6076), this protein is Putative cysteine ligase BshC.